The chain runs to 793 residues: DnaJ homolog subfamily C member 10 (793 aa).

Residues Met-1–Thr-32 form the signal peptide. Residues Asn-35–Gly-100 enclose the J domain. The region spanning Glu-130–His-232 is the Thioredoxin 1 domain. A disulfide bridge links Cys-158 with Cys-161. Trxb stretches follow at residues Thr-235–Phe-350 and Pro-348–Phe-463. Thioredoxin domains lie at His-454–Leu-553, Ser-557–Leu-665, and Ala-671–Tyr-776. A disulfide bridge links Cys-480 with Cys-483. A glycan (N-linked (GlcNAc...) asparagine) is linked at Asn-530. 2 cysteine pairs are disulfide-bonded: Cys-588–Cys-591 and Cys-700–Cys-703. A Prevents secretion from ER motif is present at residues Lys-790–Leu-793.

Interacts with HSPA5 (via its J domain). Interacts with EDEM1.

The protein localises to the endoplasmic reticulum lumen. In terms of biological role, endoplasmic reticulum disulfide reductase involved both in the correct folding of proteins and degradation of misfolded proteins. Required for efficient folding of proteins in the endoplasmic reticulum by catalyzing the removal of non-native disulfide bonds formed during the folding of proteins, such as LDLR. Also involved in endoplasmic reticulum-associated degradation (ERAD) by reducing incorrect disulfide bonds in misfolded glycoproteins recognized by EDEM1. Interaction with HSPA5 is required its activity, not for the disulfide reductase activity, but to facilitate the release of DNAJC10 from its substrate. Promotes apoptotic signaling pathway in response to endoplasmic reticulum stress. The sequence is that of DnaJ homolog subfamily C member 10 (Dnajc10) from Rattus norvegicus (Rat).